The following is a 752-amino-acid chain: Two pore channel protein 2 (752 aa).

Residues 1–84 (MAEPQAESEP…RRYYSNVCQR (84 aa)) are Cytoplasmic-facing. A helical membrane pass occupies residues 85-105 (TLSFTIFLILFLAFIETPSSL). At 106 to 127 (TSTADVRYRAAPWEPPCGLTES) the chain is on the extracellular side. The chain crosses the membrane as a helical span at residues 128-148 (VEVLCLLVFAADLSVKGYLFG). The Cytoplasmic segment spans residues 149 to 155 (WAHFQKN). A helical transmembrane segment spans residues 156–176 (LWLLGYLVVLVVSLVDWTVSL). The Extracellular segment spans residues 177 to 183 (SLVCHEP). Residues 184–204 (LRIRRLLRPFFLLQNSSMMKK) form a helical membrane-spanning segment. Positions 203-207 (KKTLK) are interaction with phosphatidylinositol 3,5-bisphosphate. At 205–218 (TLKCIRWSLPEMAS) the chain is on the cytoplasmic side. A helical transmembrane segment spans residues 219–239 (VGLLLAIHLCLFTMFGMLLFA). Residues 240–254 (GGKQDDGQDRERLTY) lie on the Extracellular side of the membrane. The helical; Pore-forming intramembrane region spans 255–279 (FQNLPESLTSLLVLLTTANNPDVMI). The Extracellular portion of the chain corresponds to 280 to 289 (PAYSKNRAYA). The helical transmembrane segment at 290–310 (IFFIVFTVIGSLFLMNLLTAI) threads the bilayer. Residues 311–436 (IYSQFRGYLM…FLFGHYYFDY (126 aa)) are Cytoplasmic-facing. Residues 437-459 (LGNLIALANLVSICVFLVLDADV) traverse the membrane as a helical segment. Over 460–465 (LPAERD) the chain is Extracellular. Residues 466–486 (DFILGILNCVFIVYYLLEMLL) traverse the membrane as a helical segment. The Cytoplasmic portion of the chain corresponds to 487–502 (KVFALGLRGYLSYPSN). The helical transmembrane segment at 503-523 (VFDGLLTVVLLVLEISTLAVY) threads the bilayer. Over 524–554 (RLPHPGWRPEMVGLLSLWDMTRMLNMLIVFR) the chain is Extracellular. The helical transmembrane segment at 555–575 (FLRIIPSMKLMAVVASTVLGL) threads the bilayer. The Cytoplasmic portion of the chain corresponds to 576–580 (VQNMR). A helical membrane pass occupies residues 581–601 (AFGGILVVVYYVFAIIGINLF). Residues 602-635 (RGVIVALPGNSSLAPANGSAPCGSFEQLEYWANN) are Extracellular-facing. Asparagine 611 and asparagine 618 each carry an N-linked (GlcNAc...) asparagine glycan. An intramembrane region (helical; Pore-forming) is located at residues 636-658 (FDDFAAALVTLWNLMVVNNWQVF). At 659 to 673 (LDAYRRYSGPWSKIY) the chain is on the extracellular side. Residues 674–694 (FVLWWLVSSVIWVNLFLALIL) form a helical membrane-spanning segment. At 695–752 (ENFLHKWDPRSHLQPLAGTPEATYQMTVELLFRDILEEPGEDELTERLSQHPHLWLCR) the chain is on the cytoplasmic side.

It belongs to the calcium channel alpha-1 subunit (TC 1.A.1.11) family. Two pore calcium channel subfamily. In terms of assembly, homodimer. Interacts with LRRK2. Interacts with HAX1. Interacts with MTOR; the interaction is required for TPCN2 ATP sensitivity. Found in a complex with LSM12, TPCN1 and TPCN2. Interacts with LSM12. N-glycosylated. As to expression, widely expressed. Expressed at high level in liver and kidney.

The protein resides in the late endosome membrane. It localises to the lysosome membrane. It is found in the melanosome membrane. It carries out the reaction Na(+)(in) = Na(+)(out). The catalysed reaction is Ca(2+)(in) = Ca(2+)(out). Its activity is regulated as follows. Regulated by Mg(2+) ions, cytosolic Mg(2+) selectively inhibits outward current while lysosomal Mg(2+) modestly inhibits both the outward and inward currents. In the absence of Mg(2+), NAADP readily activates TPCN2, with properties similar to PI(3,5)P2. Na(+) current is inhibited by ATP in a MTORC-dependent manner. ATP sensitivity is independent of PI(3,5)P2. Both current elicited by PI(3,5)P2 as well as NAADP are inhibited by tetrandrine. In terms of biological role, intracellular channel initially characterized as a non-selective Ca(2+)-permeable channel activated by NAADP (nicotinic acid adenine dinucleotide phosphate), it is also a highly-selective Na(+) channel activated directly by PI(3,5)P2 (phosphatidylinositol 3,5-bisphosphate). Localizes to the lysosomal and late endosome membranes where it regulates organellar membrane excitability, membrane trafficking, and pH homeostasis. Is associated with a plethora of physiological processes, including mTOR-dependent nutrient sensing, skin pigmentation and autophagy. Ion selectivity is not fixed but rather agonist-dependent and under defined ionic conditions, can be readily activated by both NAADP and PI(3,5)P2. As calcium channel, it increases the pH in the lysosomal lumen, as sodium channel, it promotes lysosomal exocytosis. Plays a crucial role in endolysosomal trafficking in the endolysosomal degradation pathway and is potentially involved in the homeostatic control of many macromolecules and cell metabolites. Also expressed in melanosomes of pigmented cells where mediates a Ca(2+) channel and/or PI(3,5)P2-activated melanosomal Na(+) channel to acidify pH and inhibit tyrosinase activity required for melanogenesis and pigmentation. Unlike the voltage-dependent TPCN1, TPCN2 is voltage independent and can be activated solely by PI(3,5)P2 binding. In contrast, PI(4,5)P2, PI(3,4)P2, PI(3)P and PI(5)P have no obvious effect on channel activation. Functionally, (Microbial infection) During Ebola virus (EBOV) infection, controls the movement of endosomes containing virus particles and is required by EBOV to escape from the endosomal network into the cell cytoplasm. Its function is as follows. (Microbial infection) Required for cell entry of coronaviruses SARS-CoV and SARS-CoV-2, as well as human coronavirus EMC (HCoV-EMC), by endocytosis. The polypeptide is Two pore channel protein 2 (Homo sapiens (Human)).